Here is a 504-residue protein sequence, read N- to C-terminus: Cytochrome P450 71B4 (504 aa).

The chain crosses the membrane as a helical span at residues 1–21 (MVSLLSFFLLLLVPIFFLLIF). Cysteine 446 contacts heme.

It belongs to the cytochrome P450 family. Heme serves as cofactor.

It localises to the membrane. This is Cytochrome P450 71B4 (CYP71B4) from Arabidopsis thaliana (Mouse-ear cress).